Consider the following 369-residue polypeptide: Putative agmatine deiminase (369 aa).

Cysteine 355 functions as the Amidino-cysteine intermediate in the catalytic mechanism.

The protein belongs to the agmatine deiminase family.

It carries out the reaction agmatine + H2O = N-carbamoylputrescine + NH4(+). This is Putative agmatine deiminase from Marinomonas sp. (strain MWYL1).